The primary structure comprises 597 residues: Arginine--tRNA ligase (597 aa).

Residues 138–148 (ANPTGPMHVGH) carry the 'HIGH' region motif.

This sequence belongs to the class-I aminoacyl-tRNA synthetase family. In terms of assembly, monomer.

It is found in the cytoplasm. The enzyme catalyses tRNA(Arg) + L-arginine + ATP = L-arginyl-tRNA(Arg) + AMP + diphosphate. This chain is Arginine--tRNA ligase, found in Rhodopseudomonas palustris (strain HaA2).